Consider the following 115-residue polypeptide: Nascent polypeptide-associated complex protein (115 aa).

Residues 6 to 72 (PMNPKQLKKL…SEEEKAIINI (67 aa)) form the NAC-A/B domain.

The protein belongs to the NAC-alpha family. As to quaternary structure, homodimer. Interacts with the ribosome. Binds ribosomal RNA.

Contacts the emerging nascent chain on the ribosome. The sequence is that of Nascent polypeptide-associated complex protein from Pyrococcus horikoshii (strain ATCC 700860 / DSM 12428 / JCM 9974 / NBRC 100139 / OT-3).